Consider the following 429-residue polypeptide: Aspartate--tRNA(Asp/Asn) ligase (429 aa).

E166 is an L-aspartate binding site. An aspartate region spans residues 188–191; that stretch reads QLYK. An L-aspartate-binding site is contributed by R210. Residues 210-212, 218-220, and E352 each bind ATP; these read RAE and RHL. 2 residues coordinate Mg(2+): E352 and S355. L-aspartate is bound by residues S355 and R359. ATP is bound at residue 400 to 403; it reads GAER.

The protein belongs to the class-II aminoacyl-tRNA synthetase family. Type 2 subfamily. Homodimer. The cofactor is Mg(2+).

Its subcellular location is the cytoplasm. The catalysed reaction is tRNA(Asx) + L-aspartate + ATP = L-aspartyl-tRNA(Asx) + AMP + diphosphate. Its function is as follows. Aspartyl-tRNA synthetase with relaxed tRNA specificity since it is able to aspartylate not only its cognate tRNA(Asp) but also tRNA(Asn). Reaction proceeds in two steps: L-aspartate is first activated by ATP to form Asp-AMP and then transferred to the acceptor end of tRNA(Asp/Asn). The sequence is that of Aspartate--tRNA(Asp/Asn) ligase from Methanocorpusculum labreanum (strain ATCC 43576 / DSM 4855 / Z).